The primary structure comprises 1197 residues: DNA-directed RNA polymerase subunit beta (1197 aa).

This sequence belongs to the RNA polymerase beta chain family. As to quaternary structure, the RNAP catalytic core consists of 2 alpha, 1 beta, 1 beta' and 1 omega subunit. When a sigma factor is associated with the core the holoenzyme is formed, which can initiate transcription.

It carries out the reaction RNA(n) + a ribonucleoside 5'-triphosphate = RNA(n+1) + diphosphate. Functionally, DNA-dependent RNA polymerase catalyzes the transcription of DNA into RNA using the four ribonucleoside triphosphates as substrates. This is DNA-directed RNA polymerase subunit beta from Streptococcus pyogenes serotype M12 (strain MGAS9429).